Consider the following 810-residue polypeptide: Venom phosphodiesterase 2 (810 aa).

Residues 1–23 (MIQQKVLFISLVAVTLGLGLGLG) form the signal peptide. The SMB domain occupies 33 to 77 (QSWSCSKLRCGEKRIANVLCSCSDDCLEKKDCCTDYKSICKGETS). 9 cysteine pairs are disulfide-bonded: C37–C42, C37–C54, C42–C72, C52–C54, C52–C65, C58–C64, C65–C72, C83–C129, and C91–C303. Residues D106 and T144 each contribute to the a divalent metal cation site. The AMP-threonine intermediate role is filled by T144. N175, N218, and N229 each carry an N-linked (GlcNAc...) asparagine glycan. K230 is an AMP binding site. Positions 264, 268, 311, and 312 each coordinate a divalent metal cation. H268 contacts AMP. 6 disulfide bridges follow: C319–C416, C367–C752, C500–C558, C513–C613, C515–C598, and C721–C731. N-linked (GlcNAc...) asparagine glycosylation is present at N364. H421 contacts a divalent metal cation. 4 N-linked (GlcNAc...) asparagine glycosylation sites follow: N471, N553, N633, and N704.

Belongs to the nucleotide pyrophosphatase/phosphodiesterase family. As to quaternary structure, monomer cleaved in two subunits; disulfide-linked. Is synthesized as a single-chain protein and is subsequently cleaved to form a two-subunit protein held together with disulfide bonds. A divalent metal cation serves as cofactor. Expressed by venom gland.

The protein localises to the secreted. It carries out the reaction ADP + H2O = AMP + phosphate + H(+). Functionally, hydrolyzes ADP with high activity. Shows weak or no activity on 5'-AMP, 5'-GMP, 3'-AMP, ATP, cAMP, and cGMP. Is devoid of monophosphatase and proteinase activities. Dose-dependently inhibits platelet aggregation induced by ADP (IC(50)=0.99 uM) and collagen (IC(50)=1.4 uM). In Crotalus adamanteus (Eastern diamondback rattlesnake), this protein is Venom phosphodiesterase 2.